A 453-amino-acid chain; its full sequence is Probable acetylornithine aminotransferase, mitochondrial (453 aa).

An N6-(pyridoxal phosphate)lysine modification is found at Lys302.

This sequence belongs to the class-III pyridoxal-phosphate-dependent aminotransferase family. Pyridoxal 5'-phosphate is required as a cofactor.

Its subcellular location is the mitochondrion matrix. The catalysed reaction is N(2)-acetyl-L-ornithine + 2-oxoglutarate = N-acetyl-L-glutamate 5-semialdehyde + L-glutamate. It participates in amino-acid biosynthesis; L-arginine biosynthesis; N(2)-acetyl-L-ornithine from L-glutamate: step 4/4. The sequence is that of Probable acetylornithine aminotransferase, mitochondrial (argD) from Dictyostelium discoideum (Social amoeba).